Here is a 436-residue protein sequence, read N- to C-terminus: MALPTIAIVGRPNVGKSTLFNRIAGERISIVEDVEGVTRDRIYATGEWLNRSFSMIDTGGIDDVDAPFMEQIKHQAEIAMEEADVIVFVVSGKEGITDADEYVARKLYKTHKPVILAVNKVDNPEMRNDIYDFYALGLGEPLPISSVHGIGTGDVLDAIVENLPNEYEEENPDVIKFSLIGRPNVGKSSLINAILGEDRVIASPVAGTTRDAIDTHFTDTDGQEFTMIDTAGMRKSGKVYENTEKYSVMRAMRAIDRSDVVLMVINAEEGIREYDKRIAGFAHEAGKGMIIVVNKWDTLEKDNHTMKNWEEDIREQFQYLPYAPIIFVSALTKQRLHKLPEMIKQISESQNTRIPSAVLNDVIMDAIAINPTPTDKGKRLKIFYATQVATKPPTFVIFVNEEELMHFSYLRFLENQIRKAFVFEGTPIHLIARKRK.

EngA-type G domains follow at residues 4–167 (PTIA…PNEY) and 175–351 (IKFS…ESQN). GTP-binding positions include 10-17 (GRPNVGKS), 57-61 (DTGGI), 119-122 (NKVD), 181-188 (GRPNVGKS), 229-233 (DTAGM), and 294-297 (NKWD). Positions 352–436 (TRIPSAVLND…PIHLIARKRK (85 aa)) constitute a KH-like domain.

The protein belongs to the TRAFAC class TrmE-Era-EngA-EngB-Septin-like GTPase superfamily. EngA (Der) GTPase family. Associates with the 50S ribosomal subunit.

Functionally, GTPase that plays an essential role in the late steps of ribosome biogenesis. In Streptococcus pneumoniae (strain JJA), this protein is GTPase Der.